We begin with the raw amino-acid sequence, 327 residues long: Complex I intermediate-associated protein 30, mitochondrial (327 aa).

The transit peptide at 1–24 (MALVHKLLRGTYILRKFSKPASAL) directs the protein to the mitochondrion. Residues 42 to 63 (PVASPGKASSQRKTEGDLQGDH) form a disordered region. Residues 53 to 63 (RKTEGDLQGDH) are compositionally biased toward basic and acidic residues. S318 is subject to Phosphoserine.

It belongs to the CIA30 family. Part of the mitochondrial complex I assembly/MCIA complex that comprises at least the core subunits TMEM126B, NDUFAF1, ECSIT and ACAD9 and complement subunits such as COA1 and TMEM186. Interacts with ECSIT. Interacts with ACAD9. At early stages of complex I assembly, it is found in intermediate subcomplexes that contain different subunits including NDUFB6, NDUFA6, NDUFA9, NDUFS3, NDUFS7, ND1, ND2 and ND3. Interacts with TMEM70 and TMEM242.

It localises to the mitochondrion. It is found in the mitochondrion matrix. Its function is as follows. As part of the MCIA complex, involved in the assembly of the mitochondrial complex I. The sequence is that of Complex I intermediate-associated protein 30, mitochondrial from Pongo pygmaeus (Bornean orangutan).